A 371-amino-acid chain; its full sequence is Protein OSB2, chloroplastic (371 aa).

Residues 1–20 constitute a chloroplast transit peptide; sequence MSLISKSLARIECSPFFYPR. The disordered stretch occupies residues 45–64; that stretch reads GKTGNGERKQRAKAPAKTPE. Positions 97 to 195 constitute an SSB domain; that stretch reads VANWVNLIGF…VLVQNLNFIQ (99 aa). 2 PDF region regions span residues 237–289 and 312–360; these read WNHL…PKLE and WKDL…PKLP.

Expressed in the floral abscission zone.

It localises to the plastid. Its subcellular location is the chloroplast. Functionally, binds preferentially single-stranded DNA. Does not bind to RNA. The polypeptide is Protein OSB2, chloroplastic (OSB2) (Arabidopsis thaliana (Mouse-ear cress)).